The chain runs to 881 residues: Sodium/sulfate cotransporter 1 (881 aa).

Transmembrane regions (helical) follow at residues 8 to 28 (GIVA…DWVG), 31 to 51 (ITFT…VTVA), 61 to 81 (GLLT…TGGL), 107 to 127 (MVLS…PILI), 140 to 160 (LLIP…IGTS), and 186 to 206 (IFDI…FILL). 4 RCK C-terminal domains span residues 212–296 (LPGN…EYGL), 318–402 (VFSA…IKTN), 407–492 (LHAV…FPGL), and 498–584 (EQVD…DKSF). 6 consecutive transmembrane segments (helical) span residues 601–621 (MIIG…GGLK), 625–645 (YIHL…TGCM), 658–678 (VYLT…TGVA), 684–704 (AIIS…AIYI), 775–795 (FAIV…FILV), and 803–823 (VWIV…LYFL). The tract at residues 854 to 881 (SLRRQVSHTRTDDSGSSGSPLPAPKIVA) is disordered.

It belongs to the divalent anion:Na+ symporter (DASS) superfamily. Na+/sulfate symporter (TC 2.A.47.4) family.

It localises to the cell membrane. Its function is as follows. Na(+)/sulfate cotransporter with a probable high-affinity for sulfate and a proteasome dependent turnover. The polypeptide is Sodium/sulfate cotransporter 1 (SLT1) (Chlamydomonas reinhardtii (Chlamydomonas smithii)).